A 333-amino-acid chain; its full sequence is 4-hydroxyproline epimerase (333 aa).

Residue C90 is the Proton acceptor of the active site. Substrate contacts are provided by residues G91–H92 and D249. C253 acts as the Proton donor in catalysis. G254–T255 contributes to the substrate binding site.

This sequence belongs to the proline racemase family. Homodimer.

The catalysed reaction is trans-4-hydroxy-L-proline = cis-4-hydroxy-D-proline. Allows intracellular utilization of 4-hydroxyproline, one of the major constituents of host collagen, by converting 4-hydroxy-L-proline to 4-hydroxy-D-proline, which can be further metabolized by intracellular 4-hydroxy-D-proline oxidases. Strong B-cell mitogen. Plays an important role in the regulation of intra- and extracellular amino acid pools, allowing the bacterium to profit from host precursors and enzymatic pathways. The polypeptide is 4-hydroxyproline epimerase (Brucella canis (strain ATCC 23365 / NCTC 10854 / RM-666)).